The primary structure comprises 177 residues: Interleukin-25 (177 aa).

The signal sequence occupies residues 1–32 (MRERPRLGEDSSLISLFLQVVAFLAMVMGTHT). Residues 58 to 81 (PVPPLEPARPNRHPESCRASEDGP) are disordered. The segment covering 69-78 (RHPESCRASE) has biased composition (basic and acidic residues). Cystine bridges form between Cys110–Cys168 and Cys115–Cys170. N-linked (GlcNAc...) asparagine glycosylation occurs at Asn136.

The protein belongs to the IL-17 family. As to expression, expressed at low levels in several tissues, including brain, kidney, lung, prostate, testis, spinal cord, adrenal gland, and trachea.

The protein localises to the secreted. In terms of biological role, cytokine produced by various cells such as eosinophils, T-helper type 2 (Th2) cells or epithelial cells that plays a role in internal safety of adaptive immune responses by regulating cytokine production. Promotes and augments T-helper type 2 responses locally or systemically. Exerts its activity via its receptor composed of IL17RA and IL17RB for signal transduction. In turn, stimulates the JAK2-STAT5A pathway and promotes the secretion of type-2 associated cytokines including IL4, IL9 and IL13. Also induces the release of IL8, and IL6 from eosinophils through the combined activation of MAPK and NF-kappa-B pathways. Inhibits the differentiation of T-helper (Th17) cells via the production of IL4, IL5 and IL13. This is Interleukin-25 (IL25) from Homo sapiens (Human).